The sequence spans 982 residues: Envelope glycoprotein gp160 (982 aa).

A signal peptide spans 1–106; it reads MASKESKPSR…CLMWEVRKGN (106 aa). Residues 107-831 are Extracellular-facing; the sequence is QCQAEEVIAL…WSSWFSWLKY (725 aa). Residues Asn140, Asn161, Asn206, Asn258, Asn298, Asn364, Asn381, Asn387, Asn403, Asn414, Asn435, Asn439, Asn470, Asn475, Asn481, Asn491, Asn501, Asn515, Asn527, Asn537, Asn542, Asn543, and Asn568 are each glycosylated (N-linked (GlcNAc...) asparagine; by host). The tract at residues 657 to 677 is fusion peptide; that stretch reads GIGLVIVLAIMAIIAAAGAGL. Residues 689-738 adopt a coiled-coil conformation; the sequence is RTAVQSLANATAAQQEVLEASYAMVQHIAKGIRILEARVARVEALVDMMV. Residue Asn697 is glycosylated (N-linked (GlcNAc...) asparagine; by host). The segment at 723 to 738 is immunosuppression; sequence LEARVARVEALVDMMV. N-linked (GlcNAc...) asparagine; by host glycosylation is found at Asn764, Asn771, Asn787, and Asn821. A coiled-coil region spans residues 779 to 814; sequence EEIEQHEGNLSLLLREAALQVHIAQRDARRIPDAWK. The helical transmembrane segment at 832–852 threads the bilayer; sequence IPWIIMGIVGLMCFRILMCVI. Topologically, residues 853–982 are cytoplasmic; sequence SMCLQAYKQV…PTLENDYVEL (130 aa). The S-palmitoyl cysteine; by host moiety is linked to residue Cys855.

As to quaternary structure, the mature envelope protein (Env) consists of a trimer of SU-TM heterodimers attached by noncovalent interactions or by a labile interchain disulfide bond. Post-translationally, specific enzymatic cleavages in vivo yield mature proteins. Envelope glycoproteins are synthesized as an inactive precursor that is N-glycosylated and processed likely by host cell furin or by a furin-like protease in the Golgi to yield the mature SU and TM proteins. The cleavage site between SU and TM requires the minimal sequence [KR]-X-[KR]-R. The transmembrane protein is palmitoylated.

Its subcellular location is the virion membrane. The protein resides in the host cell membrane. Functionally, the surface protein (SU) attaches the virus to the host cell by binding to its receptor. This interaction triggers the refolding of the transmembrane protein (TM) and is thought to activate its fusogenic potential by unmasking its fusion peptide. Fusion occurs at the host cell plasma membrane. The transmembrane protein (TM) acts as a class I viral fusion protein. Under the current model, the protein has at least 3 conformational states: pre-fusion native state, pre-hairpin intermediate state, and post-fusion hairpin state. During viral and target cell membrane fusion, the coiled coil regions (heptad repeats) assume a trimer-of-hairpins structure, positioning the fusion peptide in close proximity to the C-terminal region of the ectodomain. The formation of this structure appears to drive apposition and subsequent fusion of viral and target cell membranes. Membranes fusion leads to delivery of the nucleocapsid into the cytoplasm. The polypeptide is Envelope glycoprotein gp160 (env) (Maedi visna virus (strain 1514) (MVV)).